The chain runs to 218 residues: Large ribosomal subunit protein bL25 (218 aa).

The interval 187-218 (SATAAVEEAKEDGAPEESAQGQGAAEAQETNK) is disordered. Positions 202-218 (EESAQGQGAAEAQETNK) are enriched in low complexity.

Belongs to the bacterial ribosomal protein bL25 family. CTC subfamily. In terms of assembly, part of the 50S ribosomal subunit; part of the 5S rRNA/L5/L18/L25 subcomplex. Contacts the 5S rRNA. Binds to the 5S rRNA independently of L5 and L18.

Functionally, this is one of the proteins that binds to the 5S RNA in the ribosome where it forms part of the central protuberance. The chain is Large ribosomal subunit protein bL25 from Anaplasma marginale (strain St. Maries).